A 202-amino-acid polypeptide reads, in one-letter code: ADP-ribosylation factor-like protein 15 (202 aa).

GTP is bound by residues 39-46 (GLTGSGKT), 82-86 (ELGGA), and 142-145 (NHQD).

It belongs to the small GTPase superfamily. Arf family.

The polypeptide is ADP-ribosylation factor-like protein 15 (ARL15) (Bos taurus (Bovine)).